The primary structure comprises 513 residues: Xylose import ATP-binding protein XylG (513 aa).

2 ABC transporter domains span residues 5–242 (LEMK…VGRE) and 259–505 (LRVE…LRSE). 37–44 (GENGSGKS) is an ATP binding site.

This sequence belongs to the ABC transporter superfamily. Xylose importer (TC 3.A.1.2.4) family. In terms of assembly, the complex is composed of two ATP-binding proteins (XylG), two transmembrane proteins (XylH) and a solute-binding protein (XylF).

It is found in the cell inner membrane. The enzyme catalyses D-xylose(out) + ATP + H2O = D-xylose(in) + ADP + phosphate + H(+). Its function is as follows. Part of the ABC transporter complex XylFGH involved in xylose import. Responsible for energy coupling to the transport system. The chain is Xylose import ATP-binding protein XylG from Pectobacterium atrosepticum (strain SCRI 1043 / ATCC BAA-672) (Erwinia carotovora subsp. atroseptica).